The primary structure comprises 512 residues: Intermediate filament family orphan 2 (512 aa).

Positions 50-479 constitute an IF rod domain; the sequence is NIHLLKGLNV…RLIKGSADRN (430 aa). Positions 473–512 are disordered; the sequence is KGSADRNSPSPSSVASSDSGSTDEIQEDLEREADVEPMVS. The span at 480 to 492 shows a compositional bias: low complexity; that stretch reads SPSPSSVASSDSG. The span at 496 to 512 shows a compositional bias: acidic residues; the sequence is EIQEDLEREADVEPMVS.

Belongs to the intermediate filament family.

This Mus musculus (Mouse) protein is Intermediate filament family orphan 2 (Iffo2).